The sequence spans 100 residues: NADH-quinone oxidoreductase subunit K 1 (100 aa).

The next 3 membrane-spanning stretches (helical) occupy residues 4-24 (LHSY…GVLV), 29-49 (IVIF…FIAL), and 60-80 (IFVF…LALM).

This sequence belongs to the complex I subunit 4L family. As to quaternary structure, NDH-1 is composed of 14 different subunits. Subunits NuoA, H, J, K, L, M, N constitute the membrane sector of the complex.

It localises to the cell inner membrane. The enzyme catalyses a quinone + NADH + 5 H(+)(in) = a quinol + NAD(+) + 4 H(+)(out). In terms of biological role, NDH-1 shuttles electrons from NADH, via FMN and iron-sulfur (Fe-S) centers, to quinones in the respiratory chain. The immediate electron acceptor for the enzyme in this species is believed to be ubiquinone. Couples the redox reaction to proton translocation (for every two electrons transferred, four hydrogen ions are translocated across the cytoplasmic membrane), and thus conserves the redox energy in a proton gradient. This is NADH-quinone oxidoreductase subunit K 1 from Geobacter sulfurreducens (strain ATCC 51573 / DSM 12127 / PCA).